Consider the following 121-residue polypeptide: MIQLRSVLDVADNTGARKAAMISRKGQITATAGVGDIITVHIKQSSTEATVKKGEVHKAVVVRTKAPVRRADGSYLRFDSNAVVIIDPTNNPRGTRIFGPVARELRAKNFMKIISLAPEVL.

Belongs to the universal ribosomal protein uL14 family. As to quaternary structure, part of the 50S ribosomal subunit. Forms a cluster with proteins L3 and L19. In the 70S ribosome, L14 and L19 interact and together make contacts with the 16S rRNA in bridges B5 and B8.

Functionally, binds to 23S rRNA. Forms part of two intersubunit bridges in the 70S ribosome. This chain is Large ribosomal subunit protein uL14, found in Opitutus terrae (strain DSM 11246 / JCM 15787 / PB90-1).